The primary structure comprises 458 residues: ATP synthase subunit beta 2 (458 aa).

An ATP-binding site is contributed by 148-155 (GGAGVGKT).

Belongs to the ATPase alpha/beta chains family. F-type ATPases have 2 components, CF(1) - the catalytic core - and CF(0) - the membrane proton channel. CF(1) has five subunits: alpha(3), beta(3), gamma(1), delta(1), epsilon(1). CF(0) has three main subunits: a(1), b(2) and c(9-12). The alpha and beta chains form an alternating ring which encloses part of the gamma chain. CF(1) is attached to CF(0) by a central stalk formed by the gamma and epsilon chains, while a peripheral stalk is formed by the delta and b chains.

It localises to the cell inner membrane. It catalyses the reaction ATP + H2O + 4 H(+)(in) = ADP + phosphate + 5 H(+)(out). Produces ATP from ADP in the presence of a proton gradient across the membrane. The catalytic sites are hosted primarily by the beta subunits. This is ATP synthase subunit beta 2 from Marinomonas sp. (strain MWYL1).